The primary structure comprises 301 residues: tRNA-cytidine(32) 2-sulfurtransferase (301 aa).

The short motif at 55–60 (SGGKDS) is the PP-loop motif element. [4Fe-4S] cluster-binding residues include Cys130, Cys133, and Cys221.

It belongs to the TtcA family. In terms of assembly, homodimer. Mg(2+) serves as cofactor. Requires [4Fe-4S] cluster as cofactor.

It localises to the cytoplasm. It catalyses the reaction cytidine(32) in tRNA + S-sulfanyl-L-cysteinyl-[cysteine desulfurase] + AH2 + ATP = 2-thiocytidine(32) in tRNA + L-cysteinyl-[cysteine desulfurase] + A + AMP + diphosphate + H(+). It functions in the pathway tRNA modification. Functionally, catalyzes the ATP-dependent 2-thiolation of cytidine in position 32 of tRNA, to form 2-thiocytidine (s(2)C32). The sulfur atoms are provided by the cysteine/cysteine desulfurase (IscS) system. This chain is tRNA-cytidine(32) 2-sulfurtransferase, found in Acinetobacter baumannii (strain SDF).